A 392-amino-acid chain; its full sequence is Probable protein phosphatase 2C 78 (392 aa).

Positions A39–L342 constitute a PPM-type phosphatase domain. Mn(2+) contacts are provided by D73, G74, D274, and D333.

Belongs to the PP2C family. The cofactor is Mg(2+). Mn(2+) is required as a cofactor.

It catalyses the reaction O-phospho-L-seryl-[protein] + H2O = L-seryl-[protein] + phosphate. The catalysed reaction is O-phospho-L-threonyl-[protein] + H2O = L-threonyl-[protein] + phosphate. This chain is Probable protein phosphatase 2C 78, found in Oryza sativa subsp. japonica (Rice).